Reading from the N-terminus, the 469-residue chain is 1-aminocyclopropane-1-carboxylate synthase 3 (469 aa).

Lys272 is modified (N6-(pyridoxal phosphate)lysine). A disordered region spans residues 432 to 452 (APNATNHQNQQQSNANSKKKS). Positions 437 to 447 (NHQNQQQSNAN) are enriched in low complexity.

The protein belongs to the class-I pyridoxal-phosphate-dependent aminotransferase family. In terms of assembly, homodimer. It depends on pyridoxal 5'-phosphate as a cofactor.

The enzyme catalyses S-adenosyl-L-methionine = 1-aminocyclopropane-1-carboxylate + S-methyl-5'-thioadenosine + H(+). The protein operates within alkene biosynthesis; ethylene biosynthesis via S-adenosyl-L-methionine; ethylene from S-adenosyl-L-methionine: step 1/2. Functionally, catalyzes the formation of 1-aminocyclopropane-1-carboxylate, a direct precursor of ethylene in higher plants. This Solanum lycopersicum (Tomato) protein is 1-aminocyclopropane-1-carboxylate synthase 3 (ACS3).